Consider the following 406-residue polypeptide: Sorting nexin-6 (406 aa).

An N-acetylmethionine modification is found at M1. M2 is subject to N-acetylmethionine; in Sorting nexin-6, N-terminally processed. The tract at residues 2–179 (MEGLDDGPDF…NQDLSVRGKN (178 aa)) is interaction with PIM1. The PX domain occupies 26 to 173 (LQSDAALQVD…HVFLEYNQDL (148 aa)). A 1,2-diacyl-sn-glycero-3-phospho-(1D-myo-inositol-4,5-bisphosphate) contacts are provided by residues 41–47 (SERDKVK), 100–106 (FDASREK), and 114–117 (EGSM). 2 positions are modified to phosphoserine: S116 and S194. The tract at residues 182 to 199 (EKLEDFFKNMVKSADGVI) is membrane-binding amphipathic helix. One can recognise a BAR domain in the interval 203 to 406 (VKDVDDFFEH…NCLAVLNGDT (204 aa)).

This sequence belongs to the sorting nexin family. Forms heterodimers with BAR domain-containing sorting nexins SNX1 and SNX2. The heterodimers are proposed to self-assemble into helical arrays on the membrane to stabilize and expand local membrane curvature underlying endosomal tubule formation. Thought to be a component of the originally described retromer complex (also called SNX-BAR retromer) which is a pentamer containing the heterotrimeric retromer cargo-selective complex (CSC), also described as vacuolar protein sorting subcomplex (VPS), and a heterodimeric membrane-deforming subcomplex formed between SNX1 or SNX2 and SNX5 or SNX6 (also called SNX-BAR subcomplex); the respective CSC and SNX-BAR subcomplexes associate with low affinity. Interacts with SNX1, SNX2, VPS26A, VPS29, VPS35, CDKN1B, TGFB receptors, BACE1, BRMS1, PIP5K1C isoform 3. Interacts with DCTN1; the association with DCTN1 is involved in movement of retromer-c ontaining vesicles toward the TGN. Interacts with CDKN1B and GIT1. Interacts with PIM1; translocating SNX6 to the nucleus. In terms of processing, in vitro phosphorylated by PIM1; not affecting PIM1-dependent nuclear translocation.

The protein localises to the early endosome. It is found in the early endosome membrane. Its subcellular location is the cytoplasmic vesicle. The protein resides in the cytoplasm. It localises to the nucleus. In terms of biological role, involved in several stages of intracellular trafficking. Interacts with membranes phosphatidylinositol 3,4-bisphosphate and/or phosphatidylinositol 4,5-bisphosphate. Acts in part as component of the retromer membrane-deforming SNX-BAR subcomplex. The SNX-BAR retromer mediates retrograde transport of cargo proteins from endosomes to the trans-Golgi network (TGN) and is involved in endosome-to-plasma membrane transport for cargo protein recycling. The SNX-BAR subcomplex functions to deform the donor membrane into a tubular profile called endosome-to-TGN transport carrier (ETC). Does not have in vitro vesicle-to-membrane remodeling activity. Involved in retrograde endosome-to-TGN transport of lysosomal enzyme receptor IGF2R. May function as link between transport vesicles and dynactin. Negatively regulates retrograde transport of BACE1 from the cell surface to the trans-Golgi network. Involved in E-cadherin sorting and degradation; inhibits PIP5K1C isoform 3-mediated E-cadherin degradation. In association with GIT1 involved in EGFR degradation. Promotes lysosomal degradation of CDKN1B. May contribute to transcription regulation. This chain is Sorting nexin-6 (SNX6), found in Homo sapiens (Human).